The chain runs to 609 residues: Phosphomethylpyrimidine synthase (609 aa).

Substrate is bound by residues N219, M248, Y277, H313, 333 to 335, 374 to 377, and E413; these read SRG and DGLR. H417 contributes to the Zn(2+) binding site. Y440 lines the substrate pocket. H481 provides a ligand contact to Zn(2+). The [4Fe-4S] cluster site is built by C561, C564, and C569.

It belongs to the ThiC family. [4Fe-4S] cluster serves as cofactor.

It carries out the reaction 5-amino-1-(5-phospho-beta-D-ribosyl)imidazole + S-adenosyl-L-methionine = 4-amino-2-methyl-5-(phosphooxymethyl)pyrimidine + CO + 5'-deoxyadenosine + formate + L-methionine + 3 H(+). Its pathway is cofactor biosynthesis; thiamine diphosphate biosynthesis. Catalyzes the synthesis of the hydroxymethylpyrimidine phosphate (HMP-P) moiety of thiamine from aminoimidazole ribotide (AIR) in a radical S-adenosyl-L-methionine (SAM)-dependent reaction. In Deinococcus geothermalis (strain DSM 11300 / CIP 105573 / AG-3a), this protein is Phosphomethylpyrimidine synthase.